The chain runs to 443 residues: ATP-dependent protease ATPase subunit HslU (443 aa).

Residues Ile-18, 60 to 65 (GVGKTE), Asp-256, Glu-321, and Arg-393 each bind ATP.

This sequence belongs to the ClpX chaperone family. HslU subfamily. As to quaternary structure, a double ring-shaped homohexamer of HslV is capped on each side by a ring-shaped HslU homohexamer. The assembly of the HslU/HslV complex is dependent on binding of ATP.

The protein localises to the cytoplasm. Functionally, ATPase subunit of a proteasome-like degradation complex; this subunit has chaperone activity. The binding of ATP and its subsequent hydrolysis by HslU are essential for unfolding of protein substrates subsequently hydrolyzed by HslV. HslU recognizes the N-terminal part of its protein substrates and unfolds these before they are guided to HslV for hydrolysis. This Photorhabdus laumondii subsp. laumondii (strain DSM 15139 / CIP 105565 / TT01) (Photorhabdus luminescens subsp. laumondii) protein is ATP-dependent protease ATPase subunit HslU.